The sequence spans 131 residues: Small capsomere-interacting protein (131 aa).

The protein belongs to the herpesviridae small capsomere-interacting protein family. In terms of assembly, interacts with the major capsid protein/MCP.

The protein localises to the virion. The protein resides in the host nucleus. Functionally, participates in the assembly of the infectious particles by decorating the outer surface of the capsid shell and thus forming a layer between the capsid and the tegument. Complexes composed of the major capsid protein and small capsomere-interacting protein/SCP assemble together in the host cytoplasm and are translocated to the nucleus, where they accumulate and participate in capsid assembly. This is Small capsomere-interacting protein from Gallus gallus (Chicken).